The chain runs to 309 residues: Aspartate carbamoyltransferase catalytic subunit (309 aa).

Carbamoyl phosphate-binding residues include Arg-59 and Thr-60. Lys-87 contributes to the L-aspartate binding site. Arg-109, His-139, and Gln-142 together coordinate carbamoyl phosphate. 2 residues coordinate L-aspartate: Arg-172 and Arg-224. The carbamoyl phosphate site is built by Ala-265 and Pro-266.

This sequence belongs to the aspartate/ornithine carbamoyltransferase superfamily. ATCase family. Heterododecamer (2C3:3R2) of six catalytic PyrB chains organized as two trimers (C3), and six regulatory PyrI chains organized as three dimers (R2).

The enzyme catalyses carbamoyl phosphate + L-aspartate = N-carbamoyl-L-aspartate + phosphate + H(+). It participates in pyrimidine metabolism; UMP biosynthesis via de novo pathway; (S)-dihydroorotate from bicarbonate: step 2/3. Functionally, catalyzes the condensation of carbamoyl phosphate and aspartate to form carbamoyl aspartate and inorganic phosphate, the committed step in the de novo pyrimidine nucleotide biosynthesis pathway. The protein is Aspartate carbamoyltransferase catalytic subunit of Streptococcus uberis (strain ATCC BAA-854 / 0140J).